We begin with the raw amino-acid sequence, 752 residues long: Complement C2 (752 aa).

The signal sequence occupies residues 1–20 (MGPLMVLFCLLFLYPGLADS). Sushi domains are found at residues 22-86 (PSCP…VCKP), 87-146 (VRCP…VCDN), and 149-206 (GHCP…ICRQ). 6 disulfides stabilise this stretch: Cys-24/Cys-64, Cys-51/Cys-84, Cys-89/Cys-131, Cys-117/Cys-144, Cys-151/Cys-191, and Cys-177/Cys-204. Asn-29 carries N-linked (GlcNAc...) asparagine glycosylation. N-linked (GlcNAc...) asparagine glycosylation occurs at Asn-112. One can recognise a VWFA domain in the interval 254–452 (NLYLLLDCSQ…KALHQVFEHM (199 aa)). Residues 260–264 (DCSQS) carry the MIDAS-like motif motif. 2 residues coordinate Mg(2+): Ser-262 and Ser-264. N-linked (GlcNAc...) asparagine glycosylation is found at Asn-290 and Asn-333. Residue Thr-337 participates in Mg(2+) binding. Disulfide bonds link Cys-463–Cys-581, Cys-492–Cys-508, and Cys-584–Cys-600. The Peptidase S1 domain occupies 464-744 (GVGNMSANAS…MQPWLRQHLG (281 aa)). Asn-467 and Asn-471 each carry an N-linked (GlcNAc...) asparagine glycan. Residues His-507 and Asp-561 each act as charge relay system in the active site. N-linked (GlcNAc...) asparagine glycosylation is found at Asn-621 and Asn-651. 2 disulfide bridges follow: Cys-638-Cys-665 and Cys-675-Cys-705. Catalysis depends on Ser-679, which acts as the Charge relay system.

Belongs to the peptidase S1 family. As to quaternary structure, serine protease component of the C3 convertase, also named C4bC2b, composed of the serine protease complement C2b and complement C4b. Serine protease component of the C5 convertase, also named C4bC2bC3b, composed of the serine protease complement C2b, complement C3b, as well as complement C4b. Mg(2+) serves as cofactor. It depends on Mn(2+) as a cofactor. In terms of processing, cleaved and activated by different proteases depending on the complement pathway to generate complement C2a and serine protease complement C2b chains. Cleaved and activated by C1S following activation by the classical complement system. Cleaved and activated by MASP2 following activation by the lectin complement system. Cleaved and activated by GZMK following activation by the GZMK complement system.

It localises to the secreted. It is found in the cell surface. It catalyses the reaction Selective cleavage of Arg-|-Ser bond in complement component C3 alpha-chain to form C3a and C3b, and Arg-|-Xaa bond in complement component C5 alpha-chain to form C5a and C5b.. Precursor of the catalytic component of the C3 and C5 convertase complexes, which are part of the complement pathway, a cascade of proteins that leads to phagocytosis and breakdown of pathogens and signaling that strengthens the adaptive immune system. Component C2 is part of the classical, lectin and GZMK complement systems. Functionally, catalytic component of the complement C3 and C5 convertase complexes. Following complement activation, recruited to the surface of pathogens by complement C4b opsonin to form the C3 convertase, or C3b and C4b opsonins to form the C5 convertase. As part of the C3 convertase, cleaves and activate C3 into C3a anaphylatoxin and C3b opsonin, the next components of the complement pathways. As part of the C5 convertase, cleaves and activate C5 into C5a anaphylatoxin and C5b component of the membrane attack complex. This Pan troglodytes (Chimpanzee) protein is Complement C2.